The chain runs to 205 residues: MPIFFYLFTTLIIISSLCVVLSKNSVYSVLWLIFTFINGSGLMILLGAEFLAMLLIVIYVGAVAVLFLFVIMMLDINFNQAITKLRENLSLSIFITLIMFADLVITIILSTKNINYSSNISFAIANNISNTKAIGNVLYTEFMLPFQIAGLILFVAMISCITLTLKKRDRIKHQDIRKQLSHNKSNVILMTKPILNKGVENIKYE.

5 consecutive transmembrane segments (helical) span residues 1–21 (MPIF…CVVL), 26–46 (VYSV…MILL), 54–74 (LLIV…IMML), 89–109 (LSLS…TIIL), and 142–162 (FMLP…SCIT).

The protein belongs to the complex I subunit 6 family.

The protein localises to the cell membrane. The enzyme catalyses a quinone + NADH + 5 H(+)(in) = a quinol + NAD(+) + 4 H(+)(out). Its function is as follows. NDH-1 shuttles electrons from NADH, via FMN and iron-sulfur (Fe-S) centers, to quinones in the respiratory chain. Couples the redox reaction to proton translocation (for every two electrons transferred, four hydrogen ions are translocated across the cytoplasmic membrane), and thus conserves the redox energy in a proton gradient. This is NADH-quinone oxidoreductase subunit J (nuoJ) from Rickettsia prowazekii (strain Madrid E).